We begin with the raw amino-acid sequence, 644 residues long: Translation factor GUF1, mitochondrial (644 aa).

Residues 1 to 14 (MLRKAFRYLVPVRC) constitute a mitochondrion transit peptide. Residues 46 to 227 (ERYRNFSIVA…AIVDRIPPPT (182 aa)) enclose the tr-type G domain. Residues 55–62 (AHVDHGKS), 120–124 (DTPGH), and 174–177 (NKID) contribute to the GTP site.

Belongs to the TRAFAC class translation factor GTPase superfamily. Classic translation factor GTPase family. LepA subfamily.

Its subcellular location is the mitochondrion inner membrane. It carries out the reaction GTP + H2O = GDP + phosphate + H(+). In terms of biological role, promotes mitochondrial protein synthesis. May act as a fidelity factor of the translation reaction, by catalyzing a one-codon backward translocation of tRNAs on improperly translocated ribosomes. Binds to mitochondrial ribosomes in a GTP-dependent manner. The sequence is that of Translation factor GUF1, mitochondrial from Eremothecium gossypii (strain ATCC 10895 / CBS 109.51 / FGSC 9923 / NRRL Y-1056) (Yeast).